A 497-amino-acid polypeptide reads, in one-letter code: Cytochrome P450 71A20 (497 aa).

The chain crosses the membrane as a helical span at residues 3-23; it reads MILITLCLTTLLALLLKSILK. A heme-binding site is contributed by Cys440.

Belongs to the cytochrome P450 family. It depends on heme as a cofactor.

It localises to the membrane. The polypeptide is Cytochrome P450 71A20 (CYP71A20) (Arabidopsis thaliana (Mouse-ear cress)).